Reading from the N-terminus, the 212-residue chain is ER lumen protein-retaining receptor 2 (212 aa).

The Lumenal segment spans residues 1-4; that stretch reads MNIF. The chain crosses the membrane as a helical span at residues 5–24; sequence RLTGDLSHLAAIVILLLKIW. Over 25-32 the chain is Cytoplasmic; it reads KTRSCAGI. The chain crosses the membrane as a helical span at residues 33 to 52; that stretch reads SGKSQLLFALVFTTRYLDLF. The segment at 47–48 is interaction with the K-D-E-L motif on target proteins; it reads RY. Residues 53 to 58 are Lumenal-facing; it reads TSFISL. Residues 59–79 form a helical membrane-spanning segment; it reads YNTSMKVIYLACSYATVYLIY. Over 80-92 the chain is Cytoplasmic; the sequence is LKFKATYDGNHDT. A helical transmembrane segment spans residues 93–110; that stretch reads FRVEFLVVPVGGLSFLVN. Over 111–116 the chain is Lumenal; it reads HDFSPL. A helical transmembrane segment spans residues 117-135; that stretch reads EILWTFSIYLESVAILPQL. The Cytoplasmic segment spans residues 136 to 149; it reads FMISKTGEAETITT. Residues 150-168 form a helical membrane-spanning segment; that stretch reads HYLFFLGLYRALYLVNWIW. An interaction with the K-D-E-L motif on target proteins region spans residues 159–169; sequence RALYLVNWIWR. At 169 to 178 the chain is on the lumenal side; sequence RFYFEGFFDL. A helical transmembrane segment spans residues 179–199; sequence IAVVAGVVQTILYCDFFYLYI. Residues 200-212 lie on the Cytoplasmic side of the membrane; sequence TKVLKGKKLSLPA. Positions 204–207 are important for recycling of cargo proteins with the sequence motif K-D-E-L from the Golgi to the endoplasmic reticulum; it reads KGKK.

Belongs to the ERD2 family.

Its subcellular location is the endoplasmic reticulum membrane. It is found in the golgi apparatus membrane. The protein resides in the cytoplasmic vesicle. It localises to the COPI-coated vesicle membrane. Functionally, membrane receptor that binds the K-D-E-L sequence motif in the C-terminal part of endoplasmic reticulum resident proteins and maintains their localization in that compartment by participating to their vesicle-mediated recycling back from the Golgi. Binding is pH dependent, and is optimal at pH 5-5.4. This is ER lumen protein-retaining receptor 2 (KDELR2) from Homo sapiens (Human).